Reading from the N-terminus, the 231-residue chain is Aldehyde decarbonylase (231 aa).

Residues Glu32, Glu60, His63, Glu115, and His147 each coordinate Fe cation.

Belongs to the aldehyde decarbonylase family. Binds 2 metal cations per subunit. The catalytic dinuclear metal-binding site could be either a di-iron or a manganese-iron cofactor. is required as a cofactor.

The enzyme catalyses a long-chain fatty aldehyde + 2 NADPH + O2 + H(+) = a long-chain alkane + formate + 2 NADP(+) + H2O. Functionally, catalyzes the decarbonylation of fatty aldehydes to alkanes. Requires the presence of ferredoxin, ferredoxin reductase and NADPH for in vitro decarbonylase activity. Involved in the biosynthesis of alkanes, mainly heptadecane and pentadecane. This chain is Aldehyde decarbonylase, found in Synechococcus elongatus (strain ATCC 33912 / PCC 7942 / FACHB-805) (Anacystis nidulans R2).